The following is a 446-amino-acid chain: Exodeoxyribonuclease 7 large subunit (446 aa).

It belongs to the XseA family. In terms of assembly, heterooligomer composed of large and small subunits.

The protein resides in the cytoplasm. The catalysed reaction is Exonucleolytic cleavage in either 5'- to 3'- or 3'- to 5'-direction to yield nucleoside 5'-phosphates.. In terms of biological role, bidirectionally degrades single-stranded DNA into large acid-insoluble oligonucleotides, which are then degraded further into small acid-soluble oligonucleotides. The polypeptide is Exodeoxyribonuclease 7 large subunit (Streptococcus pneumoniae (strain Hungary19A-6)).